A 191-amino-acid polypeptide reads, in one-letter code: Akirin-1 (191 aa).

The disordered stretch occupies residues 17 to 70 (LLSPGSPKRRRCAPLPGPTPGLRPPDAEPPPLQMQTPPASLQQPAPPGSERRLP). Ser-22 carries the phosphoserine modification. Positions 23–28 (PKRRRC) match the Nuclear localization signal motif. Positions 31-48 (LPGPTPGLRPPDAEPPPL) are enriched in pro residues. Residues 49-59 (QMQTPPASLQQ) are compositionally biased toward polar residues. Position 71 is a phosphothreonine (Thr-71). An SYVS motif motif is present at residues 188–191 (SYVS).

Belongs to the akirin family. As to expression, expressed in macrophages and satellite cells.

The protein resides in the nucleus. Functionally, molecular adapter that acts as a bridge between proteins, and which is involved skeletal muscle development. Functions as a signal transducer for MSTN during skeletal muscle regeneration and myogenesis. May regulate chemotaxis of both macrophages and myoblasts by reorganising actin cytoskeleton, leading to more efficient lamellipodia formation via a PI3 kinase dependent pathway. In contrast to AKIRIN2, not involved in nuclear import of proteasomes. This is Akirin-1 from Mus musculus (Mouse).